Reading from the N-terminus, the 500-residue chain is Glutamate--tRNA ligase (500 aa).

The 'HIGH' region signature appears at 13 to 23; the sequence is PSPTGTPHVGM. Positions 258 to 262 match the 'KMSKS' region motif; the sequence is KLSKR. Lys261 contacts ATP.

The protein belongs to the class-I aminoacyl-tRNA synthetase family. Glutamate--tRNA ligase type 1 subfamily. In terms of assembly, monomer.

The protein resides in the cytoplasm. The enzyme catalyses tRNA(Glu) + L-glutamate + ATP = L-glutamyl-tRNA(Glu) + AMP + diphosphate. Catalyzes the attachment of glutamate to tRNA(Glu) in a two-step reaction: glutamate is first activated by ATP to form Glu-AMP and then transferred to the acceptor end of tRNA(Glu). This Corynebacterium jeikeium (strain K411) protein is Glutamate--tRNA ligase.